Consider the following 229-residue polypeptide: PKHD-type hydroxylase Nham_1514 (229 aa).

One can recognise a Fe2OG dioxygenase domain in the interval 78–180 (QIFPPLFNRY…RVASFFWLQS (103 aa)). Fe cation is bound by residues His98, Asp100, and His161. Residue Arg171 participates in 2-oxoglutarate binding.

The cofactor is Fe(2+). It depends on L-ascorbate as a cofactor.

This is PKHD-type hydroxylase Nham_1514 from Nitrobacter hamburgensis (strain DSM 10229 / NCIMB 13809 / X14).